A 493-amino-acid polypeptide reads, in one-letter code: Glycerol kinase (493 aa).

An ADP-binding site is contributed by Thr11. Thr11, Thr12, and Ser13 together coordinate ATP. Thr11 lines the sn-glycerol 3-phosphate pocket. ADP is bound at residue Arg15. Sn-glycerol 3-phosphate is bound by residues Arg80, Glu81, Tyr132, and Asp241. Positions 80, 81, 132, 241, and 242 each coordinate glycerol. ADP is bound by residues Thr263 and Gly306. The ATP site is built by Thr263, Gly306, Gln310, and Gly408. ADP is bound at residue Gly408.

The protein belongs to the FGGY kinase family.

The catalysed reaction is glycerol + ATP = sn-glycerol 3-phosphate + ADP + H(+). The protein operates within polyol metabolism; glycerol degradation via glycerol kinase pathway; sn-glycerol 3-phosphate from glycerol: step 1/1. Its activity is regulated as follows. Inhibited by fructose 1,6-bisphosphate (FBP). Its function is as follows. Key enzyme in the regulation of glycerol uptake and metabolism. Catalyzes the phosphorylation of glycerol to yield sn-glycerol 3-phosphate. This chain is Glycerol kinase, found in Cereibacter sphaeroides (strain KD131 / KCTC 12085) (Rhodobacter sphaeroides).